Reading from the N-terminus, the 156-residue chain is MSRRHRAEKRDVIPDAKYGDVILAKFMNSLMYHGKKSAAETIIYGAFDQMQQKASVDPLRTFHEALENVMPALEVRSRRVGGATYQVPVEVRPDRRRALAIRWIIAAARARNETTMVARLSGELLDAANNRGSAVKKREDTHRMAEANRAFSHYRW.

The protein belongs to the universal ribosomal protein uS7 family. Part of the 30S ribosomal subunit. Contacts proteins S9 and S11.

Functionally, one of the primary rRNA binding proteins, it binds directly to 16S rRNA where it nucleates assembly of the head domain of the 30S subunit. Is located at the subunit interface close to the decoding center, probably blocks exit of the E-site tRNA. The chain is Small ribosomal subunit protein uS7 from Parvibaculum lavamentivorans (strain DS-1 / DSM 13023 / NCIMB 13966).